A 337-amino-acid chain; its full sequence is Hsp90 co-chaperone Cdc37-like 1 (337 aa).

The span at 1–11 (MEQPWPPPGPW) shows a compositional bias: pro residues. A disordered region spans residues 1 to 42 (MEQPWPPPGPWSLPRAEGEAEEENDLDVFPSSPRCPQLPGGS). The self-association stretch occupies residues 2-171 (EQPWPPPGPW…YEQKIRHFGM (170 aa)). Ser-32 and Ser-88 each carry phosphoserine. A coiled-coil region spans residues 85–122 (NSESLDQEHAKAQIAVSELRQREEEWRQKEEALVQREK). The interval 147 to 277 (KDTEDEDKSE…SRVRLYSQSQ (131 aa)) is self-association and interaction with Hsp90. The tract at residues 267-337 (KSRVRLYSQS…DDEPKMMDTV (71 aa)) is interaction with Hsp70. The required for interaction with STIP1 stretch occupies residues 278–337 (SFQPMTVQNHVPHSGVGSIGLLESLPQNPDYLQYSINTALCSLNSVVHKEDDEPKMMDTV).

It belongs to the CDC37 family. In terms of assembly, self-associates. Forms complexes with Hsp70 and Hsp90. Interacts with CDC37, FKBP4, PPID and STIP1.

Its subcellular location is the cytoplasm. In terms of biological role, co-chaperone that binds to numerous proteins and promotes their interaction with Hsp70 and Hsp90. This Pongo abelii (Sumatran orangutan) protein is Hsp90 co-chaperone Cdc37-like 1 (CDC37L1).